A 261-amino-acid polypeptide reads, in one-letter code: tRNA pseudouridine synthase A (261 aa).

Aspartate 51 acts as the Nucleophile in catalysis. Tyrosine 109 is a binding site for substrate.

Belongs to the tRNA pseudouridine synthase TruA family. In terms of assembly, homodimer.

The enzyme catalyses uridine(38/39/40) in tRNA = pseudouridine(38/39/40) in tRNA. Functionally, formation of pseudouridine at positions 38, 39 and 40 in the anticodon stem and loop of transfer RNAs. In Shewanella frigidimarina (strain NCIMB 400), this protein is tRNA pseudouridine synthase A.